Reading from the N-terminus, the 124-residue chain is Prefoldin subunit beta (124 aa).

This sequence belongs to the prefoldin subunit beta family. In terms of assembly, heterohexamer of two alpha and four beta subunits.

Its subcellular location is the cytoplasm. Its function is as follows. Molecular chaperone capable of stabilizing a range of proteins. Seems to fulfill an ATP-independent, HSP70-like function in archaeal de novo protein folding. This Thermoplasma acidophilum (strain ATCC 25905 / DSM 1728 / JCM 9062 / NBRC 15155 / AMRC-C165) protein is Prefoldin subunit beta (pfdB).